Here is a 274-residue protein sequence, read N- to C-terminus: MQQLQNVIETAFERRADITPANVDTVTREAVNQVISLLDSGALRVAEKIDGQWVTHQWLKKAVLLSFRINDNQVIDGGESRYFDKVPMKFADYDEARFQKEGFRVVPPAAVRQGAFIARNTVLMPSYVNIGAYVDEGTMVDTWATVGSCAQIGKNVHLSGGVGIGGVLEPLQANPTIIEDNCFIGARSEVVEGVIVEEGSVISMGVYLGQSTKIYDRETGEVHYGRVPAGSVVVSGNLPSKDGKYSLYCAVIVKKVDAKTRGKVGINELLRTID.

It belongs to the transferase hexapeptide repeat family.

It localises to the cytoplasm. It catalyses the reaction (S)-2,3,4,5-tetrahydrodipicolinate + succinyl-CoA + H2O = (S)-2-succinylamino-6-oxoheptanedioate + CoA. Its pathway is amino-acid biosynthesis; L-lysine biosynthesis via DAP pathway; LL-2,6-diaminopimelate from (S)-tetrahydrodipicolinate (succinylase route): step 1/3. The protein is 2,3,4,5-tetrahydropyridine-2,6-dicarboxylate N-succinyltransferase of Salmonella heidelberg (strain SL476).